The chain runs to 444 residues: NADH-ubiquinone oxidoreductase chain 4 (444 aa).

13 helical membrane passes run 4–24 (YLFM…WWLV), 28–48 (IFLL…LSMI), 53–73 (GVDF…CLMI), 87–107 (NFFV…FSSL), 109–129 (LFSF…LILG), 141–161 (VYLM…LFSI), 173–193 (LIDF…AFLV), 212–232 (PISG…YGIF), 245–265 (FNYF…FVCF), 272–294 (SLIA…TMNW), 306–326 (GHGI…ELLG), 330–350 (LLIN…WFLL), and 373–393 (IISW…FSAV).

This sequence belongs to the complex I subunit 4 family.

It is found in the mitochondrion membrane. The enzyme catalyses a ubiquinone + NADH + 5 H(+)(in) = a ubiquinol + NAD(+) + 4 H(+)(out). In terms of biological role, core subunit of the mitochondrial membrane respiratory chain NADH dehydrogenase (Complex I) that is believed to belong to the minimal assembly required for catalysis. Complex I functions in the transfer of electrons from NADH to the respiratory chain. The immediate electron acceptor for the enzyme is believed to be ubiquinone. This chain is NADH-ubiquinone oxidoreductase chain 4 (ND4), found in Locusta migratoria (Migratory locust).